The following is an 878-amino-acid chain: Leucine--tRNA ligase (878 aa).

Residues 43–53 (PYPSGRIHMGH) carry the 'HIGH' region motif. Positions 630–634 (KMSKS) match the 'KMSKS' region motif. Lys-633 contributes to the ATP binding site.

This sequence belongs to the class-I aminoacyl-tRNA synthetase family.

It localises to the cytoplasm. It catalyses the reaction tRNA(Leu) + L-leucine + ATP = L-leucyl-tRNA(Leu) + AMP + diphosphate. The polypeptide is Leucine--tRNA ligase (Rhodopseudomonas palustris (strain BisB5)).